The sequence spans 790 residues: Endonuclease MutS2 (790 aa).

334–341 (GPNTGGKT) contributes to the ATP binding site. Positions 715–790 (IDVRGQNLEE…GMGVTIVHLK (76 aa)) constitute a Smr domain.

Belongs to the DNA mismatch repair MutS family. MutS2 subfamily. Homodimer. Binds to stalled ribosomes, contacting rRNA.

Functionally, endonuclease that is involved in the suppression of homologous recombination and thus may have a key role in the control of bacterial genetic diversity. In terms of biological role, acts as a ribosome collision sensor, splitting the ribosome into its 2 subunits. Detects stalled/collided 70S ribosomes which it binds and splits by an ATP-hydrolysis driven conformational change. Acts upstream of the ribosome quality control system (RQC), a ribosome-associated complex that mediates the extraction of incompletely synthesized nascent chains from stalled ribosomes and their subsequent degradation. Probably generates substrates for RQC. The polypeptide is Endonuclease MutS2 (Alkaliphilus oremlandii (strain OhILAs) (Clostridium oremlandii (strain OhILAs))).